The sequence spans 459 residues: U-box domain-containing protein 75 (459 aa).

The U-box domain occupies 64-138 (AVPAVFICPI…AAWFSRRYTR (75 aa)). ARM repeat units lie at residues 188–229 (QSVT…GVPL) and 231–270 (ADAKAALMQPAKVSLLVDMLNEGAVDTKINCVRLIRILME).

In terms of assembly, interacts with GPA1. In terms of tissue distribution, expressed highly in panicles at flowering time, at moderate levels in vegetative shoot apices, leaf sheaths, leaf blades, and elongating internodes, and at low levels in roots.

The protein resides in the cell membrane. The enzyme catalyses S-ubiquitinyl-[E2 ubiquitin-conjugating enzyme]-L-cysteine + [acceptor protein]-L-lysine = [E2 ubiquitin-conjugating enzyme]-L-cysteine + N(6)-ubiquitinyl-[acceptor protein]-L-lysine.. It functions in the pathway protein modification; protein ubiquitination. E3 ubiquitin ligase that may function as positive regulator of brassinosteroid (BR) signaling. Possesses E3 ubiquitin ligase in vitro. Acts together with the heterotrimeric G alpha subunit GPA1 at the plasma membrane to mediate a BR signaling pathway that affects plant growth and development. Does not seem to be involved in gibberellin or cytokinin responses. In Oryza sativa subsp. japonica (Rice), this protein is U-box domain-containing protein 75.